A 691-amino-acid chain; its full sequence is Hormonally up-regulated neu tumor-associated kinase homolog A (691 aa).

The 259-residue stretch at 55 to 313 (YLIGRKLGEG…IQQALANRWL (259 aa)) folds into the Protein kinase domain. ATP contacts are provided by residues 61 to 69 (LGEGSFAKV) and Lys-84. Asp-179 functions as the Proton acceptor in the catalytic mechanism. Basic and acidic residues predominate over residues 406–425 (MNKNSYEERRSKDLEKRGEP). 4 disordered regions span residues 406–475 (MNKN…GGLS), 499–518 (QSPDPRTPKIMRRQDSHSQE), 580–640 (FQFD…SRGR), and 655–679 (QVVSPKGEKPLETRMPPLHQMSPGY). The segment covering 440–453 (SHRQNACLTPQGHS) has biased composition (polar residues). Over residues 457-470 (PVKERRSSKSERES) the composition is skewed to basic and acidic residues. A compositionally biased stretch (polar residues) spans 582 to 597 (FDNTSPSKSHFNQASF). Residues 604–620 (SPSSPESMSPTSPHSPS) are compositionally biased toward low complexity. The span at 621–631 (CNNNISGNLGS) shows a compositional bias: polar residues.

It belongs to the protein kinase superfamily. CAMK Ser/Thr protein kinase family. SNF1 subfamily.

The enzyme catalyses L-seryl-[protein] + ATP = O-phospho-L-seryl-[protein] + ADP + H(+). The catalysed reaction is L-threonyl-[protein] + ATP = O-phospho-L-threonyl-[protein] + ADP + H(+). This is Hormonally up-regulated neu tumor-associated kinase homolog A (hunk-a) from Xenopus laevis (African clawed frog).